The chain runs to 448 residues: Asparagine--tRNA ligase (448 aa).

The protein belongs to the class-II aminoacyl-tRNA synthetase family. Homodimer.

Its subcellular location is the cytoplasm. The enzyme catalyses tRNA(Asn) + L-asparagine + ATP = L-asparaginyl-tRNA(Asn) + AMP + diphosphate + H(+). The protein is Asparagine--tRNA ligase of Streptococcus pyogenes serotype M4 (strain MGAS10750).